Here is a 379-residue protein sequence, read N- to C-terminus: UDP-4-amino-4-deoxy-L-arabinose--oxoglutarate aminotransferase (379 aa).

The residue at position 182 (lysine 182) is an N6-(pyridoxal phosphate)lysine.

The protein belongs to the DegT/DnrJ/EryC1 family. ArnB subfamily. Homodimer. It depends on pyridoxal 5'-phosphate as a cofactor.

It carries out the reaction UDP-4-amino-4-deoxy-beta-L-arabinose + 2-oxoglutarate = UDP-beta-L-threo-pentopyranos-4-ulose + L-glutamate. Its pathway is nucleotide-sugar biosynthesis; UDP-4-deoxy-4-formamido-beta-L-arabinose biosynthesis; UDP-4-deoxy-4-formamido-beta-L-arabinose from UDP-alpha-D-glucuronate: step 2/3. It participates in bacterial outer membrane biogenesis; lipopolysaccharide biosynthesis. Its function is as follows. Catalyzes the conversion of UDP-4-keto-arabinose (UDP-Ara4O) to UDP-4-amino-4-deoxy-L-arabinose (UDP-L-Ara4N). The modified arabinose is attached to lipid A and is required for resistance to polymyxin and cationic antimicrobial peptides. This chain is UDP-4-amino-4-deoxy-L-arabinose--oxoglutarate aminotransferase, found in Salmonella paratyphi A (strain ATCC 9150 / SARB42).